The following is a 489-amino-acid chain: Dipeptide and tripeptide permease B (489 aa).

Topologically, residues 1 to 27 are cytoplasmic; sequence MNTTAPTGLLQQPRPFFMIFFVELWER. Residues 28 to 48 traverse the membrane as a helical segment; sequence FGYYGVQGILAVFFVKQLGFS. Over 49 to 52 the chain is Periplasmic; it reads QEQA. Residues 53–73 traverse the membrane as a helical segment; sequence FITFGAFAALVYGLISIGGYV. Over 74–82 the chain is Cytoplasmic; that stretch reads GDHLLGTKR. A helical transmembrane segment spans residues 83–103; sequence TLVLGAIVLAIGYFMTGMSLL. Over 104–106 the chain is Periplasmic; sequence NPD. Residues 107 to 127 form a helical membrane-spanning segment; it reads LIFIALGTIAVGNGLFKANPA. The Cytoplasmic portion of the chain corresponds to 128–146; the sequence is SLLSKCYQPKDPRLDGAFT. Residues 147-167 traverse the membrane as a helical segment; the sequence is LFYMSINIGSLLSLSLAPVIA. Topologically, residues 168–172 are periplasmic; that stretch reads DKFGY. Residues 173 to 193 traverse the membrane as a helical segment; sequence AVTYNLCGAGLIVALLVYFAC. At 194–214 the chain is on the cytoplasmic side; sequence RGMVKNIGSEPDHKPLRFRNL. Residues 215–235 traverse the membrane as a helical segment; that stretch reads LLVLLGTVVMIFLCAWLMHNV. Position 236 (lysine 236) is a topological domain, periplasmic. The chain crosses the membrane as a helical span at residues 237 to 257; the sequence is IANLVLIVLSIVVTIFFFREA. Over 258–267 the chain is Cytoplasmic; that stretch reads FRLDKTGRNK. The chain crosses the membrane as a helical span at residues 268–288; the sequence is MFVAFILMIEAVLFYILYAQM. Over 289 to 315 the chain is Periplasmic; the sequence is PTSLNFFAINNVHHEILGFAINPVSFQ. The helical transmembrane segment at 316-338 threads the bilayer; the sequence is ALNPFWVVVASPVLAAIYTRLGS. Residues 339 to 348 lie on the Cytoplasmic side of the membrane; sequence KGKDLTMPMK. Residues 349–369 form a helical membrane-spanning segment; sequence FTLGMFLCALGFLTAAAGMWF. Residues 370 to 379 are Periplasmic-facing; sequence ADAQGLTSPW. The helical transmembrane segment at 380–400 threads the bilayer; it reads FIVLVYLFQSLGELLISALGL. Residues 401–410 are Cytoplasmic-facing; the sequence is AMVAALVPQH. Residues 411-431 form a helical membrane-spanning segment; sequence LMGFILGMWFLTQAAAFLLGG. Residues 432–454 are Periplasmic-facing; that stretch reads YVATFTAVPENITDPLQTLPIYT. The helical transmembrane segment at 455 to 475 threads the bilayer; the sequence is GVFSKIGLVTLAVTVVMAIMV. Residues 476-489 are Cytoplasmic-facing; sequence PWLNRMINTPGTEQ.

Belongs to the major facilitator superfamily. Proton-dependent oligopeptide transporter (POT/PTR) (TC 2.A.17) family. DtpB subfamily.

The protein localises to the cell inner membrane. Functionally, proton-dependent permease that transports di- and tripeptides. The polypeptide is Dipeptide and tripeptide permease B (Salmonella typhimurium (strain LT2 / SGSC1412 / ATCC 700720)).